Consider the following 78-residue polypeptide: Mitochondrial import inner membrane translocase subunit Tim9 (78 aa).

The Twin CX3C motif motif lies at 24-48 (CFTSCVNEFGSRTVNAKEESCANNC). Cystine bridges form between Cys24-Cys48 and Cys28-Cys44.

This sequence belongs to the small Tim family. In terms of assembly, heterohexamer; composed of 3 copies of tim-9/tin-9.1 and 3 copies of tim-10/tin-10, named soluble 70 kDa complex. The complex associates with the tim-22 component of the TIM22 complex. Interacts with multi-pass transmembrane proteins in transit.

It localises to the mitochondrion inner membrane. Functionally, mitochondrial intermembrane chaperone that participates in the import and insertion of multi-pass transmembrane proteins into the mitochondrial inner membrane. May also be required for the transfer of beta-barrel precursors from the TOM complex to the sorting and assembly machinery (SAM complex) of the outer membrane. Acts as a chaperone-like protein that protects the hydrophobic precursors from aggregation and guide them through the mitochondrial intermembrane space. The chain is Mitochondrial import inner membrane translocase subunit Tim9 (tin-9.1) from Caenorhabditis briggsae.